Reading from the N-terminus, the 194-residue chain is Thioredoxin peroxidase (194 aa).

The Thioredoxin domain occupies 2-160 (LQPNMPAPNF…ALRLLDAFIF (159 aa)). C47 serves as the catalytic Cysteine sulfenic acid (-SOH) intermediate.

It belongs to the peroxiredoxin family. AhpC/Prx1 subfamily. As to quaternary structure, homodimer; disulfide-linked, upon oxidation.

The catalysed reaction is a hydroperoxide + [thioredoxin]-dithiol = an alcohol + [thioredoxin]-disulfide + H2O. Antioxidant. Could be involved in protection against reactive oxygen species (ROS) generated by metabolic processes and/or protection of the parasite against ROS released by immune effector cells. Its function is as follows. Thiol-specific peroxidase that catalyzes the reduction of hydrogen peroxide and organic hydroperoxides to water and alcohols, respectively. Plays a role in cell protection against oxidative stress by detoxifying peroxides and as sensor of hydrogen peroxide-mediated signaling events. This Fasciola hepatica (Liver fluke) protein is Thioredoxin peroxidase.